The chain runs to 447 residues: MTKQIITLVGRPNVGKSTLFNRLSIRKKAIVHDLPGVTRDRKYTDGKIGSFEFLLIDTPGLDENPNSMGERLIEQTTKAILEADLICFMVDGRSGILPDDKLLSSFVRKYNKPAILVVNKCEKAFDFDKEYYKLGFDSMIAISAEHGTGLIDLYDEIIAKLPEEESIKTNIADPIKGDCLQIVVSGRPNAGKSTFINALINDERLLTGPEAGITRESIEIDWQYKNNHIKLIDTAGLRKKSTITESLEKLSASDTINSIKFANTVILMIDALAPLKQQDLNIASHVVHEGRSIVIVVNKWDLVKESEKEAFQEEFYYQINTHLPQVKGIPVLFISAINKQNIEQVLDACLKIYKIWNKKITTSKLNEWLNFTTEAHLLPLQKGGRRVRVKYMTQTKTRPPTFKLFSNNPEKITDSYTRYLVNNMREAFDMPGVPIRFIYVKTKNPYV.

EngA-type G domains lie at 4 to 165 (QIIT…PEEE) and 180 to 357 (LQIV…KIWN). GTP is bound by residues 10–17 (GRPNVGKS), 57–61 (DTPGL), 119–122 (NKCE), 186–193 (GRPNAGKS), 233–237 (DTAGL), and 298–301 (NKWD). Residues 358 to 443 (KKITTSKLNE…PIRFIYVKTK (86 aa)) enclose the KH-like domain.

It belongs to the TRAFAC class TrmE-Era-EngA-EngB-Septin-like GTPase superfamily. EngA (Der) GTPase family. Associates with the 50S ribosomal subunit.

Functionally, GTPase that plays an essential role in the late steps of ribosome biogenesis. The sequence is that of GTPase Der from Rickettsia conorii (strain ATCC VR-613 / Malish 7).